We begin with the raw amino-acid sequence, 334 residues long: D-fructose 1,6-bisphosphatase class 2/sedoheptulose 1,7-bisphosphatase (334 aa).

Residues D33, E57, D85, and E88 each contribute to the Mn(2+) site. Substrate contacts are provided by residues 88–90 (EGT), Y119, 164–166 (RAR), and 186–188 (DGD). E213 provides a ligand contact to Mn(2+).

This sequence belongs to the FBPase class 2 family. In terms of assembly, homotetramer. It depends on Mn(2+) as a cofactor.

It carries out the reaction beta-D-fructose 1,6-bisphosphate + H2O = beta-D-fructose 6-phosphate + phosphate. The enzyme catalyses D-sedoheptulose 1,7-bisphosphate + H2O = D-sedoheptulose 7-phosphate + phosphate. The protein operates within carbohydrate biosynthesis; Calvin cycle. Catalyzes the hydrolysis of fructose 1,6-bisphosphate (Fru 1,6-P2) and sedoheptulose 1,7-bisphosphate (Sed 1,7-P2) to fructose 6-phosphate and sedoheptulose 7-phosphate, respectively. This is D-fructose 1,6-bisphosphatase class 2/sedoheptulose 1,7-bisphosphatase from Synechococcus sp. (strain CC9311).